The primary structure comprises 245 residues: Gas vesicle protein F (245 aa).

This sequence belongs to the gas vesicle GvpF/GvpL family. In terms of assembly, binds GvpA.

The protein resides in the gas vesicle. In terms of biological role, a minor component of the gas vesicle, may be involved in preventing GvpA aggregation during gas vesicle nucleation. Gas vesicles (GV) are hollow, gas filled proteinaceous nanostructures. During planktonic growth they allow positioning of the organism at a favorable depth for light or nutrient acquisition. This is Gas vesicle protein F from Dolichospermum flosaquae (Anabaena flos-aquae).